The sequence spans 363 residues: Peptide chain release factor 1 (363 aa).

At Gln-237 the chain carries N5-methylglutamine. A compositionally biased stretch (basic and acidic residues) spans 284–296 (EDEKRRSAEESTR). The segment at 284-305 (EDEKRRSAEESTRRSLVASGDR) is disordered.

The protein belongs to the prokaryotic/mitochondrial release factor family. Post-translationally, methylated by PrmC. Methylation increases the termination efficiency of RF1.

It localises to the cytoplasm. Functionally, peptide chain release factor 1 directs the termination of translation in response to the peptide chain termination codons UAG and UAA. This Shewanella baltica (strain OS195) protein is Peptide chain release factor 1.